Consider the following 475-residue polypeptide: 3-isopropylmalate dehydratase large subunit (475 aa).

3 residues coordinate [4Fe-4S] cluster: C347, C407, and C410. The segment at 418–442 (LAPGERSASTSNRNFEGRQGKGGRT) is disordered.

This sequence belongs to the aconitase/IPM isomerase family. LeuC type 1 subfamily. Heterodimer of LeuC and LeuD. It depends on [4Fe-4S] cluster as a cofactor.

The enzyme catalyses (2R,3S)-3-isopropylmalate = (2S)-2-isopropylmalate. It functions in the pathway amino-acid biosynthesis; L-leucine biosynthesis; L-leucine from 3-methyl-2-oxobutanoate: step 2/4. Functionally, catalyzes the isomerization between 2-isopropylmalate and 3-isopropylmalate, via the formation of 2-isopropylmaleate. This is 3-isopropylmalate dehydratase large subunit from Streptomyces griseus subsp. griseus (strain JCM 4626 / CBS 651.72 / NBRC 13350 / KCC S-0626 / ISP 5235).